Consider the following 379-residue polypeptide: Cytochrome b (379 aa).

4 consecutive transmembrane segments (helical) span residues 33–53 (FGSL…FLAM), 77–98 (WLIR…FIHV), 113–133 (WNIG…GYVL), and 178–198 (FFAF…VHLL). Residues His-83 and His-97 each coordinate heme b. Heme b-binding residues include His-182 and His-196. His-201 contributes to the a ubiquinone binding site. Helical transmembrane passes span 226 to 246 (IKDL…ALFF), 288 to 308 (LGGV…PLLN), 320 to 340 (ITQT…WIGG), and 347 to 367 (FTMX…ILMP).

It belongs to the cytochrome b family. In terms of assembly, the cytochrome bc1 complex contains 11 subunits: 3 respiratory subunits (MT-CYB, CYC1 and UQCRFS1), 2 core proteins (UQCRC1 and UQCRC2) and 6 low-molecular weight proteins (UQCRH/QCR6, UQCRB/QCR7, UQCRQ/QCR8, UQCR10/QCR9, UQCR11/QCR10 and a cleavage product of UQCRFS1). This cytochrome bc1 complex then forms a dimer. Heme b is required as a cofactor.

The protein resides in the mitochondrion inner membrane. In terms of biological role, component of the ubiquinol-cytochrome c reductase complex (complex III or cytochrome b-c1 complex) that is part of the mitochondrial respiratory chain. The b-c1 complex mediates electron transfer from ubiquinol to cytochrome c. Contributes to the generation of a proton gradient across the mitochondrial membrane that is then used for ATP synthesis. In Necromys amoenus (Pleasant bolo mouse), this protein is Cytochrome b (MT-CYB).